A 1492-amino-acid polypeptide reads, in one-letter code: DNA-directed RNA polymerase subunit beta' (1492 aa).

Residues Cys-67, Cys-69, Cys-82, and Cys-85 each coordinate Zn(2+). 3 residues coordinate Mg(2+): Asp-499, Asp-501, and Asp-503. Residues Cys-867, Cys-943, Cys-950, and Cys-953 each contribute to the Zn(2+) site.

Belongs to the RNA polymerase beta' chain family. In terms of assembly, the RNAP catalytic core consists of 2 alpha, 1 beta, 1 beta' and 1 omega subunit. When a sigma factor is associated with the core the holoenzyme is formed, which can initiate transcription. It depends on Mg(2+) as a cofactor. Zn(2+) is required as a cofactor.

It catalyses the reaction RNA(n) + a ribonucleoside 5'-triphosphate = RNA(n+1) + diphosphate. Its function is as follows. DNA-dependent RNA polymerase catalyzes the transcription of DNA into RNA using the four ribonucleoside triphosphates as substrates. The sequence is that of DNA-directed RNA polymerase subunit beta' from Chlorobium phaeobacteroides (strain DSM 266 / SMG 266 / 2430).